Here is a 232-residue protein sequence, read N- to C-terminus: 7-cyano-7-deazaguanine synthase (232 aa).

ATP is bound at residue 8 to 18 (FSGGQDSTTCL). The Zn(2+) site is built by Cys189, Cys198, Cys201, and Cys204.

This sequence belongs to the QueC family. Requires Zn(2+) as cofactor.

The catalysed reaction is 7-carboxy-7-deazaguanine + NH4(+) + ATP = 7-cyano-7-deazaguanine + ADP + phosphate + H2O + H(+). The protein operates within purine metabolism; 7-cyano-7-deazaguanine biosynthesis. In terms of biological role, catalyzes the ATP-dependent conversion of 7-carboxy-7-deazaguanine (CDG) to 7-cyano-7-deazaguanine (preQ(0)). The polypeptide is 7-cyano-7-deazaguanine synthase (Photorhabdus laumondii subsp. laumondii (strain DSM 15139 / CIP 105565 / TT01) (Photorhabdus luminescens subsp. laumondii)).